Reading from the N-terminus, the 229-residue chain is PKHD-type hydroxylase BRADO6316 (229 aa).

The region spanning 78–180 (QIFPPLFNRY…RVASFFWLQS (103 aa)) is the Fe2OG dioxygenase domain. Fe cation contacts are provided by His98, Asp100, and His161. Position 171 (Arg171) interacts with 2-oxoglutarate.

Requires Fe(2+) as cofactor. The cofactor is L-ascorbate.

This Bradyrhizobium sp. (strain ORS 278) protein is PKHD-type hydroxylase BRADO6316.